A 78-amino-acid chain; its full sequence is Translation initiation factor IF-1 (78 aa).

The region spanning 1 to 72 is the S1-like domain; sequence MAKEAEMEFE…TRGRITYRKI (72 aa).

This sequence belongs to the IF-1 family. As to quaternary structure, component of the 30S ribosomal translation pre-initiation complex which assembles on the 30S ribosome in the order IF-2 and IF-3, IF-1 and N-formylmethionyl-tRNA(fMet); mRNA recruitment can occur at any time during PIC assembly.

The protein localises to the cytoplasm. Functionally, one of the essential components for the initiation of protein synthesis. Stabilizes the binding of IF-2 and IF-3 on the 30S subunit to which N-formylmethionyl-tRNA(fMet) subsequently binds. Helps modulate mRNA selection, yielding the 30S pre-initiation complex (PIC). Upon addition of the 50S ribosomal subunit IF-1, IF-2 and IF-3 are released leaving the mature 70S translation initiation complex. In Mesoplasma florum (strain ATCC 33453 / NBRC 100688 / NCTC 11704 / L1) (Acholeplasma florum), this protein is Translation initiation factor IF-1.